A 60-amino-acid polypeptide reads, in one-letter code: Truncated protein A35 homolog (60 aa).

This sequence belongs to the chordopoxvirinae A35 protein family.

The chain is Truncated protein A35 homolog (A38R) from Variola virus (isolate Human/India/Ind3/1967) (VARV).